A 158-amino-acid polypeptide reads, in one-letter code: Transcription elongation factor GreA (158 aa).

This sequence belongs to the GreA/GreB family.

Necessary for efficient RNA polymerase transcription elongation past template-encoded arresting sites. The arresting sites in DNA have the property of trapping a certain fraction of elongating RNA polymerases that pass through, resulting in locked ternary complexes. Cleavage of the nascent transcript by cleavage factors such as GreA or GreB allows the resumption of elongation from the new 3'terminus. GreA releases sequences of 2 to 3 nucleotides. This chain is Transcription elongation factor GreA, found in Rhizobium etli (strain CIAT 652).